Consider the following 298-residue polypeptide: Homoserine kinase (298 aa).

Position 83 to 93 (83 to 93) interacts with ATP; sequence PISRGLGSSSS.

It belongs to the GHMP kinase family. Homoserine kinase subfamily.

It localises to the cytoplasm. The enzyme catalyses L-homoserine + ATP = O-phospho-L-homoserine + ADP + H(+). The protein operates within amino-acid biosynthesis; L-threonine biosynthesis; L-threonine from L-aspartate: step 4/5. Catalyzes the ATP-dependent phosphorylation of L-homoserine to L-homoserine phosphate. The protein is Homoserine kinase of Clostridium botulinum (strain Eklund 17B / Type B).